The following is a 545-amino-acid chain: MAAKEVKFGNDARVKMLAGVNILANAVKVTLGPKGRNVVLDKSFGSPVITKDGVSVAREIELEDKFENMGAQMVKEVASKANDAAGDGTTTATVLAQSIVVEGLKAVAAGMNPMDLKRGIDKAVIAAVAELKKLSQECSDTKAIAQVGTISANSDESIGEIIATAMEKVGKEGVITVEEGQALENELEVVEGMQFDRGYLSPYFINKPETGSIELDSPFILLVDKKISNIRELLPILEGLAKTGKPLLIVAEDVEGEALATLVVNNMRGIVKVAAVKAPGFGDRRKAMLQDVAILTGGTVIAEEIGLELEKATLEDLGTAKRVVITKDNTTIIDGSGEHTQITSRVAQIKQQMEDSSSDYDKEKLQERMAKLAGGVAVIKVGAATEVEMKEKKARVEDALHATRAAVEEGVVPGGGVALVRVASMIADIEVLNEDQKHGVVIALRAMEAPLRQIATNAGQEASVVANTVKNGTGNYGYNAGNDTYGDMLEMGILDPTKVTRSALQFAASIAGLMITTEAMIAEIPQESAPDMGGMGGMGGMGGMM.

ATP contacts are provided by residues 30-33 (TLGP), K51, 87-91 (DGTTT), G415, and D495.

The protein belongs to the chaperonin (HSP60) family. As to quaternary structure, forms a cylinder of 14 subunits composed of two heptameric rings stacked back-to-back. Interacts with the co-chaperonin GroES.

The protein localises to the cytoplasm. The catalysed reaction is ATP + H2O + a folded polypeptide = ADP + phosphate + an unfolded polypeptide.. Its function is as follows. Together with its co-chaperonin GroES, plays an essential role in assisting protein folding. The GroEL-GroES system forms a nano-cage that allows encapsulation of the non-native substrate proteins and provides a physical environment optimized to promote and accelerate protein folding. In Shewanella denitrificans (strain OS217 / ATCC BAA-1090 / DSM 15013), this protein is Chaperonin GroEL.